The sequence spans 315 residues: MNQLDALKQVTTVVADTGDFRQLGAYRPQDATTNPSLILKAVQKADYAPLLQESVERWRGRALDEIMDRLIVRFGCEILSLIPGRVSTEVDARLSFDTMATVTRGERIIDLYRAEGVDTARVLIKIAATWEGIEAARILEERGIHTNLTLLFSPVQAVACGAARVQLISPFVGRIYDWYKKQAGAQWDEAAMAGANDPGVQSVRQIYQYYKHFGIRTEVMGASFRNIGQITALAGCDLLTIAPELLAQLAASEAPLERALDPASAKDLELQPVQYDEPGFRYALNADAMATEKLAEGIRAFAADAAKLEQMVLAA.

Residue K125 is the Schiff-base intermediate with substrate of the active site.

Belongs to the transaldolase family. Type 1 subfamily. Homodimer.

It localises to the cytoplasm. The enzyme catalyses D-sedoheptulose 7-phosphate + D-glyceraldehyde 3-phosphate = D-erythrose 4-phosphate + beta-D-fructose 6-phosphate. It participates in carbohydrate degradation; pentose phosphate pathway; D-glyceraldehyde 3-phosphate and beta-D-fructose 6-phosphate from D-ribose 5-phosphate and D-xylulose 5-phosphate (non-oxidative stage): step 2/3. Transaldolase is important for the balance of metabolites in the pentose-phosphate pathway. The polypeptide is Transaldolase (Paracidovorax citrulli (strain AAC00-1) (Acidovorax citrulli)).